A 228-amino-acid chain; its full sequence is Orotidine 5'-phosphate decarboxylase (228 aa).

Residues aspartate 11, lysine 33, 60-69 (DLKLHDIPNT), threonine 117, arginine 178, glutamine 186, glycine 206, and arginine 207 each bind substrate. Lysine 62 (proton donor) is an active-site residue.

The protein belongs to the OMP decarboxylase family. Type 1 subfamily. As to quaternary structure, homodimer.

It catalyses the reaction orotidine 5'-phosphate + H(+) = UMP + CO2. It functions in the pathway pyrimidine metabolism; UMP biosynthesis via de novo pathway; UMP from orotate: step 2/2. Catalyzes the decarboxylation of orotidine 5'-monophosphate (OMP) to uridine 5'-monophosphate (UMP). The sequence is that of Orotidine 5'-phosphate decarboxylase from Ehrlichia canis (strain Jake).